Consider the following 248-residue polypeptide: Clathrin light chain A (248 aa).

A disordered region spans residues 1-92 (MAELDPFGAP…YYQESNGPTD (92 aa)). The span at 13–25 (APGGPALGNGVAG) shows a compositional bias: gly residues. Residues 61–71 (GPQPHGEPPGG) show a composition bias toward pro residues. The interval 100 to 162 (VDRLQSEPES…QLQKTKANNR (63 aa)) is involved in binding clathrin heavy chain. Residues Ser-105 and Ser-206 each carry the phosphoserine modification. Lys-223 is modified (N6-acetyllysine). Phosphoserine is present on Ser-236. Lys-242 bears the N6-acetyllysine mark.

Belongs to the clathrin light chain family. In terms of assembly, clathrin coats are formed from molecules containing 3 heavy chains and 3 light chains. Interacts with CALY; the interaction stimulates clathrin self-assembly and clathrin-mediated endocytosis. Interacts with CKAP5 and TACC3 forming the TACC3/ch-TOG/clathrin complex located at spindle inter-microtubules bridges; the complex implicates clathrin triskelions.

It is found in the cytoplasmic vesicle membrane. Its subcellular location is the membrane. The protein localises to the coated pit. The protein resides in the cytoplasm. It localises to the cytoskeleton. It is found in the spindle. Clathrin is the major protein of the polyhedral coat of coated pits and vesicles. Acts as a component of the TACC3/ch-TOG/clathrin complex proposed to contribute to stabilization of kinetochore fibers of the mitotic spindle by acting as inter-microtubule bridge. The sequence is that of Clathrin light chain A (CLTA) from Homo sapiens (Human).